A 279-amino-acid chain; its full sequence is Movement protein (279 aa).

Positions 255-279 (SPPFAIGSPSASRNNSFRSQVVNGL) are disordered. The segment covering 263–279 (PSASRNNSFRSQVVNGL) has biased composition (polar residues).

It belongs to the cucumovirus movement protein family.

It localises to the host cell junction. It is found in the host plasmodesma. Transports viral genome to neighboring plant cells directly through plasmosdesmata, without any budding. The movement protein allows efficient cell to cell propagation, by bypassing the host cell wall barrier. Acts by forming a tubular structure at the host plasmodesmata, enlarging it enough to allow free passage of virion capsids. This Cucumis sativus (Cucumber) protein is Movement protein.